The chain runs to 464 residues: Cysteine--tRNA ligase (464 aa).

Cys32 is a Zn(2+) binding site. Positions 34 to 44 (VTVYDDCHIGH) match the 'HIGH' region motif. Positions 213, 238, and 242 each coordinate Zn(2+). The 'KMSKS' region signature appears at 270–274 (KMSKS). Position 273 (Lys273) interacts with ATP.

This sequence belongs to the class-I aminoacyl-tRNA synthetase family. As to quaternary structure, monomer. Requires Zn(2+) as cofactor.

Its subcellular location is the cytoplasm. It catalyses the reaction tRNA(Cys) + L-cysteine + ATP = L-cysteinyl-tRNA(Cys) + AMP + diphosphate. In Francisella tularensis subsp. tularensis (strain SCHU S4 / Schu 4), this protein is Cysteine--tRNA ligase.